Consider the following 515-residue polypeptide: Envelope glycoprotein (515 aa).

An N-terminal signal peptide occupies residues 1 to 33 (MPKKRRSRRRPQPIIRWVSLTLTLLALCRPIQT). Residues 34-435 (WRCSLSLGNQ…LGLTAWVRET (402 aa)) are Extracellular-facing. 2 N-linked (GlcNAc...) asparagine; by host glycosylation sites follow: Asn129 and Asn203. The CXXC signature appears at 212–215 (CAIC). Disulfide bonds link Cys212/Cys215, Cys212/Cys392, and Cys384/Cys391. Asn230, Asn251, Asn256, Asn271, and Asn287 each carry an N-linked (GlcNAc...) asparagine; by host glycan. Residues 304 to 324 (VAALTLGLALSVGLTGINVAV) are fusion peptide. Coiled-coil stretches lie at residues 330-376 (QRLT…WLYI) and 388-420 (NEPCCFLRIQNDSIIRLGDLQPLSQRVSTDWQW). A glycan (N-linked (GlcNAc...) asparagine; by host) is linked at Asn351. Residues 365-381 (AQNRRGLDWLYIRLGFQ) form an immunosuppression region. The CX6CC motif lies at 384–392 (CPTINEPCC). Asn398 carries an N-linked (GlcNAc...) asparagine; by host glycan. A helical membrane pass occupies residues 436–456 (IHSVLSLFLLALFLLFLAPCL). Cys455 carries the S-palmitoyl cysteine; by host lipid modification. The Cytoplasmic portion of the chain corresponds to 457 to 515 (IKCLTSRLLKLLRQAPHFPEISLTPKPDSDYQALLPSAPEIYSHLSPVKPDYINLRPCP).

The mature envelope protein (Env) consists of a trimer of SU-TM heterodimers attached by a labile interchain disulfide bond. Post-translationally, specific enzymatic cleavages in vivo yield mature proteins. Envelope glycoproteins are synthesized as an inactive precursor that is N-glycosylated and processed likely by host cell furin or by a furin-like protease in the Golgi to yield the mature SU and TM proteins. The cleavage site between SU and TM requires the minimal sequence [KR]-X-[KR]-R. The CXXC motif is highly conserved across a broad range of retroviral envelope proteins. It is thought to participate in the formation of a labile disulfide bond possibly with the CX6CC motif present in the transmembrane protein. Isomerization of the intersubunit disulfide bond to an SU intrachain disulfide bond is thought to occur upon receptor recognition in order to allow membrane fusion. In terms of processing, the transmembrane protein is palmitoylated.

The protein resides in the virion membrane. It is found in the host cell membrane. The surface protein (SU) attaches the virus to the host cell by binding to its receptor. This interaction triggers the refolding of the transmembrane protein (TM) and is thought to activate its fusogenic potential by unmasking its fusion peptide. Fusion occurs at the host cell plasma membrane. In terms of biological role, the transmembrane protein (TM) acts as a class I viral fusion protein. Under the current model, the protein has at least 3 conformational states: pre-fusion native state, pre-hairpin intermediate state, and post-fusion hairpin state. During viral and target cell membrane fusion, the coiled coil regions (heptad repeats) assume a trimer-of-hairpins structure, positioning the fusion peptide in close proximity to the C-terminal region of the ectodomain. The formation of this structure appears to drive apposition and subsequent fusion of viral and target cell membranes. Membranes fusion leads to delivery of the nucleocapsid into the cytoplasm. The polypeptide is Envelope glycoprotein (env) (Bovine leukemia virus (isolate American FLK) (BLV)).